We begin with the raw amino-acid sequence, 153 residues long: Transcriptional repressor NrdR (153 aa).

Residues 3–34 (CPSCQHHGTRVLDSRPVDEGRSIRRRRECEQC) fold into a zinc finger. One can recognise an ATP-cone domain in the interval 49-139 (LIVVKKQGMR…VYRQFKDLNV (91 aa)).

It belongs to the NrdR family. It depends on Zn(2+) as a cofactor.

Its function is as follows. Negatively regulates transcription of bacterial ribonucleotide reductase nrd genes and operons by binding to NrdR-boxes. The protein is Transcriptional repressor NrdR of Geobacillus sp. (strain WCH70).